The following is a 417-amino-acid chain: MPSEVLTSYYDYPTHDQEAWWRDTGPLFGRFLKGAGYDVHTQYQYLVFFIKNILPSLGPYPARWRSTITPTGLPIEYSLNFQLNSRPLLRIGFEPLSRFSGTPQDPYNKIAAADLLNQLSKLQLHEFDTQLFNHFTNEFELSKSESESLQKQGGINGKSTVRSQTAFGFDLKGGRVAVKGYAFAGLKNRATGTPVGQLISNSIRNLEPQMHCWDSFSILNSYMEESDGWNEYSFVSWDCVDIERSRLKLYGVHNAVTWDKVKEMWTLGGRIENNATIKTGLELLQHMWSLLQINEGDRDYKGGFAADNGGKTLPIIWNYELNKGSPHPAPKFYFPVHGENDLQVSKSISEFFTHLGWQDHARQYPHLLRQIYPNQNISQTERLQAWISFAYNERTGPYLSVYYYSAERPPWGSDQVK.

Positions 90, 179, 181, 248, 250, 333, 398, and 402 each coordinate dimethylallyl diphosphate.

This sequence belongs to the tryptophan dimethylallyltransferase family.

The catalysed reaction is cyclo(L-tryptophyl-L-alanyl) + dimethylallyl diphosphate = preechinulin + diphosphate. Its pathway is secondary metabolite biosynthesis. It participates in alkaloid biosynthesis. Its function is as follows. Prenyltransferase; part of the gene cluster that mediates the biosynthesis of echinulin family alkaloid. The pathway begins with the biosynthesis of the cyclic dipeptide cyclo-L-Trp-L-Ala (cyclo-TA) by the NRPS echPS via condensation of L-alanine and L-tryptophan. The prenyltransferase echPT1 then catalyzes the first prenylation step, a reverse prenylation reaction at C2, to yield preechinulin. Preechinulin is the substrate of the cytochrome P450 monooxygenase echP450 that catalyzes the formation of the double bond between C10 and C11 to produce neoechulin A. The unique prenyltransferase echPT2 functions as a competitive enzyme with echP450 for preechinulin metabolization and uses preechinulin for effective regiospecific prenylations. Preechinulin is prenylated by echPT2 at C5 or C7. C7-prenylation leads to accumulation of tardioxopiperazine B without further modification by echPT2. In contrast, the C5-prenylated tardioxopiperazine A can be prenylated again by echPT2, predominantly at C7 to form echinulin or less frequently at C4 to give variecolorin L. EchPT2 also accepts neoechilunin A to produce varlecolorin G (prenylation at C5) or isoechinulin A (prenylation at C7). EchPT2 further converts isoechinulin A into dehydroechinulin. Moreover, a yet unidentified enzyme can also convert neoechilunin A into neoechilunin B by introducing a double bond between positions C14 and C17 and thus provides a further substrate to echPT2 for C5 and C7 prenylation. The protein is Echinulin prenyltransferase 1 of Aspergillus ruber (Eurotium rubrum).